Here is a 296-residue protein sequence, read N- to C-terminus: MARPGLTIALLLTTPNLVDACQQWLPDTRYHSIVLSGPHQGQEQLDLVSTLEAQQEEIDAVVVEQQLLDASSRDQLLGRGLLFPAVVVGEMKGHVDYHAEELHLAEDQLAQLGYTVDAAISRFLRQGRADGRSDDDGLASVDKLSRRLQERLGYLGVFYKRDPSRFLGSLPTEERRELLESLQRTYRDLLISYFSDPAASNQALESFVNTAFFSDLPITRTVDIHVDQIDEFWKQLRLEGNKSEFLQDYRLALLDVMAHLCEMYRRSIPPDIPLSGLASGRHRREADLPDAPEVSS.

Residues 2 to 133 (ARPGLTIALL…LRQGRADGRS (132 aa)) are psR domain, binds oxidized quinones. Residues 2–152 (ARPGLTIALL…KLSRRLQERL (151 aa)) form the KaiA N-terminal domain. The segment at 153–161 (GYLGVFYKR) is flexible linker. The KaiA C-terminal domain occupies 162-270 (DPSRFLGSLP…CEMYRRSIPP (109 aa)).

As to quaternary structure, homodimer. The KaiABC complex composition changes during the circadian cycle to control KaiC phosphorylation. Complexes KaiC(6), KaiA(2-4):KaiC(6), KaiB(6):KaiC(6) and KaiC(6):KaiB(6):KaiA(12) are among the most important forms, many form cooperatively. KaiA and CikA bind to the same region of the KaiB(fs) form and therefore compete.

In terms of biological role, key component of the KaiABC oscillator complex, which constitutes the main circadian regulator in cyanobacteria. Complex composition changes during the circadian cycle to control KaiC phosphorylation. KaiA stimulates KaiC autophosphorylation, while KaiB sequesters KaiA, leading to KaiC autodephosphorylation. KaiA binding to the KaiC CII domain during the subjective day yields KaiA(2-4):KaiC(6) complexes which stimulate KaiC autophosphorylation. Phospho-Ser-431 KaiC accumulation triggers binding of KaiB during the subjective night to form the KaiB(6):KaiC(6) complex, leading to changes in the output regulators CikA and SasA. KaiB(6):KaiC(6) formation exposes a site for KaiA binding on KaiB that sequesters KaiA from KaiC's CII domain, making the KaiC(6):KaiB(6):KaiA(12) complex resulting in KaiC autodephosphorylation. Complete dephosphorylation of KaiC leads to dissociation of KaiA(2):KaiB(1), completing 1 cycle of the Kai oscillator. Binds oxidized quinones via the N-terminal PsR domain, allowing it to sense redox changes and possibly mediate clock input. The protein is Circadian clock oscillator protein KaiA of Parasynechococcus marenigrum (strain WH8102).